The following is a 149-amino-acid chain: Transcriptional repressor NrdR (149 aa).

The segment at 3-34 is a zinc-finger region; that stretch reads CPFCTAEETKVIDSRLAADGYQIRRRRECIGC. Residues 49–139 form the ATP-cone domain; sequence PYIIKNNGNR…VYLSFDDIEE (91 aa).

It belongs to the NrdR family. Zn(2+) is required as a cofactor.

Functionally, negatively regulates transcription of bacterial ribonucleotide reductase nrd genes and operons by binding to NrdR-boxes. In Haemophilus ducreyi (strain 35000HP / ATCC 700724), this protein is Transcriptional repressor NrdR.